Consider the following 1032-residue polypeptide: Putative oxidoreductase YgfK (1032 aa).

The region spanning 928-958 (RFQTLHLDAYCNECGNCAQFCPWNGKPYKDK) is the 4Fe-4S ferredoxin-type domain. [4Fe-4S] cluster is bound by residues cysteine 938, cysteine 941, cysteine 944, and cysteine 948.

It depends on [4Fe-4S] cluster as a cofactor.

Could be an iron-sulfur flavoprotein with NADPH:O(2) oxidoreductase activity. In Escherichia coli O157:H7, this protein is Putative oxidoreductase YgfK (ygfK).